The chain runs to 705 residues: Ribosomal RNA large subunit methyltransferase K/L (705 aa).

In terms of domain architecture, THUMP spans 43-154; it reads LMYQSLMWSR…KDTASIALDL (112 aa).

Belongs to the methyltransferase superfamily. RlmKL family.

The protein localises to the cytoplasm. The catalysed reaction is guanosine(2445) in 23S rRNA + S-adenosyl-L-methionine = N(2)-methylguanosine(2445) in 23S rRNA + S-adenosyl-L-homocysteine + H(+). It carries out the reaction guanosine(2069) in 23S rRNA + S-adenosyl-L-methionine = N(2)-methylguanosine(2069) in 23S rRNA + S-adenosyl-L-homocysteine + H(+). Its function is as follows. Specifically methylates the guanine in position 2445 (m2G2445) and the guanine in position 2069 (m7G2069) of 23S rRNA. This is Ribosomal RNA large subunit methyltransferase K/L from Erwinia tasmaniensis (strain DSM 17950 / CFBP 7177 / CIP 109463 / NCPPB 4357 / Et1/99).